The sequence spans 283 residues: MTATIIDGKETAKEKREQLAKEVEELKAQGVVPGLAVILIGDDPASVSYVTGKKKAAETMGMKFKLDRFDSSLTEAELLTVIDQYNQNPEFHGILVQLPLPDHISEKAVIERISPDKDVDGFHPLNVGKMLLGEDTFLPCTPHGIVELLKKTNVDLSGKEVVVVGRSNIVGKPVGQLLLNENATVTYCHSRTKNMSEHTKKADILVVAVGKANFIKADQIKEGAIVIDVGVNRLESGKLCGDVQFDEAKEKASFITPVPGGVGPMTITMLAHNTVKSARRTLS.

Residues 165 to 167 (GRS), Ser190, and Val231 each bind NADP(+).

Belongs to the tetrahydrofolate dehydrogenase/cyclohydrolase family. In terms of assembly, homodimer.

The enzyme catalyses (6R)-5,10-methylene-5,6,7,8-tetrahydrofolate + NADP(+) = (6R)-5,10-methenyltetrahydrofolate + NADPH. The catalysed reaction is (6R)-5,10-methenyltetrahydrofolate + H2O = (6R)-10-formyltetrahydrofolate + H(+). It functions in the pathway one-carbon metabolism; tetrahydrofolate interconversion. Catalyzes the oxidation of 5,10-methylenetetrahydrofolate to 5,10-methenyltetrahydrofolate and then the hydrolysis of 5,10-methenyltetrahydrofolate to 10-formyltetrahydrofolate. The protein is Bifunctional protein FolD of Bacillus velezensis (strain DSM 23117 / BGSC 10A6 / LMG 26770 / FZB42) (Bacillus amyloliquefaciens subsp. plantarum).